A 414-amino-acid chain; its full sequence is Serine/threonine transporter SstT (414 aa).

At 2-15 the chain is on the cytoplasmic side; it reads TTQHSPGLFRRLAH. Residues 16 to 36 traverse the membrane as a helical segment; the sequence is GSLVKQILAGLILGILLAWIS. Over 37–45 the chain is Periplasmic; sequence KPAAEAVGL. The helical transmembrane segment at 46–66 threads the bilayer; that stretch reads LGTLFVGALKAVAPILVLMLV. Over 67–83 the chain is Cytoplasmic; sequence MASIANHQHGQKTNIRP. Residues 84–104 traverse the membrane as a helical segment; it reads ILFLYLLGTFSAALAAVIFSF. The Periplasmic segment spans residues 105 to 142; the sequence is AFPSTLHLSSSAGDISPPSGIVEVMRGLVMSMVSNPID. A helical membrane pass occupies residues 143–163; sequence ALLKGNYIGILVWAIGLGFAL. The Cytoplasmic portion of the chain corresponds to 164–179; sequence RHGNETTKNLVNDMSN. Residues 180–200 form a helical membrane-spanning segment; it reads AVTFMVKLVIHFAPIGIFGLV. Topologically, residues 201–217 are periplasmic; that stretch reads SSTLATTGFSTLWGYAQ. A helical transmembrane segment spans residues 218-238; that stretch reads LLVVLVGCMLLVALVVNPLLV. At 239–299 the chain is on the cytoplasmic side; the sequence is WWKIRRNPFP…VSIPLGATIN (61 aa). A helical transmembrane segment spans residues 300 to 320; the sequence is MAGAAITITVLTLAAVNTLGI. The Periplasmic segment spans residues 321 to 331; that stretch reads PVDLPTALLLS. A helical transmembrane segment spans residues 332–352; the sequence is VVASLCACGASGVAGGSLLLI. Residues 353–414 are Cytoplasmic-facing; the sequence is PLACNMFGIS…DRLANSALRN (62 aa).

This sequence belongs to the dicarboxylate/amino acid:cation symporter (DAACS) (TC 2.A.23) family.

It localises to the cell inner membrane. It carries out the reaction L-serine(in) + Na(+)(in) = L-serine(out) + Na(+)(out). The enzyme catalyses L-threonine(in) + Na(+)(in) = L-threonine(out) + Na(+)(out). Functionally, involved in the import of serine and threonine into the cell, with the concomitant import of sodium (symport system). The polypeptide is Serine/threonine transporter SstT (Escherichia coli (strain UTI89 / UPEC)).